The chain runs to 103 residues: Large ribosomal subunit protein bL21 (103 aa).

The protein belongs to the bacterial ribosomal protein bL21 family. In terms of assembly, part of the 50S ribosomal subunit. Contacts protein L20.

Its function is as follows. This protein binds to 23S rRNA in the presence of protein L20. The chain is Large ribosomal subunit protein bL21 from Kineococcus radiotolerans (strain ATCC BAA-149 / DSM 14245 / SRS30216).